The chain runs to 408 residues: Lysosome-associated membrane glycoprotein 3 (408 aa).

The N-terminal stretch at 1–20 (MPGQTSAVAVLLCLAVILHG) is a signal peptide. Over 21–373 (YQIREKEFPE…IVDECLSDYT (353 aa)) the chain is Lumenal. N-linked (GlcNAc...) asparagine glycans are attached at residues Asn-55 and Asn-225. An intrachain disulfide couples Cys-230 to Cys-267. Asn-284 carries an N-linked (GlcNAc...) asparagine glycan. A disulfide bridge links Cys-331 with Cys-368. The helical transmembrane segment at 374–394 (VVLPVVGIIVVVLCVVGLGIY) threads the bilayer. Residues 395–408 (KIRQRRQSSAYQRI) lie on the Cytoplasmic side of the membrane.

Belongs to the LAMP family. Monomer. Interacts with FURIN.

The protein localises to the cell surface. It is found in the lysosome membrane. It localises to the cytoplasmic vesicle membrane. Its subcellular location is the early endosome membrane. In terms of biological role, lysosomal membrane glycoprotein which plays a role in the unfolded protein response (UPR) that contributes to protein degradation and cell survival during proteasomal dysfunction. Plays a role in the process of fusion of the lysosome with the autophagosome, thereby modulating the autophagic process. Promotes hepatocellular lipogenesis through activation of the PI3K/Akt pathway. May also play a role in dendritic cell function and in adaptive immunity. This chain is Lysosome-associated membrane glycoprotein 3 (Lamp3), found in Rattus norvegicus (Rat).